Reading from the N-terminus, the 184-residue chain is Ribosome-recycling factor (184 aa).

A disordered region spans residues 134–167 (MNDQLKKDEKNGDITEDELRSGTEDVQKATDNSI).

Belongs to the RRF family.

The protein localises to the cytoplasm. Responsible for the release of ribosomes from messenger RNA at the termination of protein biosynthesis. May increase the efficiency of translation by recycling ribosomes from one round of translation to another. The sequence is that of Ribosome-recycling factor from Staphylococcus aureus (strain Mu3 / ATCC 700698).